Reading from the N-terminus, the 473-residue chain is Knob-associated histidine-rich protein (473 aa).

The N-terminal stretch at 1–34 (MKSFKNKNTLRRKKAFPVFTKILLVSFLVWVLKC) is a signal peptide. N-linked (GlcNAc...) asparagine glycosylation occurs at asparagine 42. Residues 57 to 87 (AQKQHEHHHHHHHQHQHQHQAPHQAHHHHHH) are compositionally biased toward basic residues. 2 disordered regions span residues 57–143 (AQKQ…QVFR) and 347–473 (SSVN…DGSK). Residues 95 to 104 (PQVHQQVHGQ) are compositionally biased toward low complexity. Over residues 108–117 (HHHHHHHHHQ) the composition is skewed to basic residues. Composition is skewed to basic and acidic residues over residues 354-375 (KHGDEKHHSSKKHEGNDGEGEK) and 396-405 (KDNEDAESVK). Positions 406–422 (SKKHKSHDCEKKKSKKH) are enriched in basic residues. Composition is skewed to basic and acidic residues over residues 423–444 (KDNEDAESVKSKKSVKEKGEKH) and 453–473 (KTNEENKNKEKTNNLKSDGSK).

It is found in the secreted. Functionally, KAHRP might mimick human histidine-rich glycoproteins to anchor host thrombospondin or a parasite analog in a binding complex with the endothelial cell receptor. The chain is Knob-associated histidine-rich protein from Plasmodium falciparum.